A 371-amino-acid polypeptide reads, in one-letter code: Collectin-46 (371 aa).

The signal sequence occupies residues 1–20 (MLLLPLSVLLLLTQPWRSLG). Positions 43–215 (PEGGLPGRDG…ERGAKGESGL (173 aa)) are disordered. Residues 46–216 (GLPGRDGQDG…RGAKGESGLA (171 aa)) form the Collagen-like domain. Positions 51–65 (DGQDGREGPQGEKGD) are enriched in basic and acidic residues. Asparagine 90 carries an N-linked (GlcNAc...) asparagine glycan. Positions 113–128 (PAGREGPSGKQGSMGP) are enriched in low complexity. Positions 139 to 148 (GPKGGMGAPG) are enriched in gly residues. Positions 170-191 (APGSAGVAGPAGAIGPQGPSGA) are enriched in low complexity. Residues 198–210 (KGDRGDPGERGAK) are compositionally biased toward basic and acidic residues. Positions 201–203 (RGD) match the Cell attachment site motif. Residues 273 to 371 (QLCREAKGQL…SEPLLVICEF (99 aa)) enclose the C-type lectin domain. 2 cysteine pairs are disulfide-bonded: cysteine 275–cysteine 369 and cysteine 347–cysteine 361.

It belongs to the SFTPD family. In terms of assembly, oligomeric complex of 4 set of homotrimers. In terms of processing, hydroxylated. In terms of tissue distribution, highly expressed in thymus and liver.

It is found in the secreted. The polypeptide is Collectin-46 (CL46) (Bos taurus (Bovine)).